The chain runs to 95 residues: Protein TusB (95 aa).

It belongs to the DsrH/TusB family. Heterohexamer, formed by a dimer of trimers. The hexameric TusBCD complex contains 2 copies each of TusB, TusC and TusD. The TusBCD complex interacts with TusE.

The protein localises to the cytoplasm. Functionally, part of a sulfur-relay system required for 2-thiolation of 5-methylaminomethyl-2-thiouridine (mnm(5)s(2)U) at tRNA wobble positions. The sequence is that of Protein TusB from Yersinia enterocolitica serotype O:8 / biotype 1B (strain NCTC 13174 / 8081).